The primary structure comprises 357 residues: Alanine racemase (357 aa).

Residue K34 is the Proton acceptor; specific for D-alanine of the active site. Position 34 is an N6-(pyridoxal phosphate)lysine (K34). R127 contributes to the substrate binding site. The active-site Proton acceptor; specific for L-alanine is Y252. M301 contacts substrate.

Belongs to the alanine racemase family. Requires pyridoxal 5'-phosphate as cofactor.

The catalysed reaction is L-alanine = D-alanine. The protein operates within amino-acid biosynthesis; D-alanine biosynthesis; D-alanine from L-alanine: step 1/1. Functionally, catalyzes the interconversion of L-alanine and D-alanine. May also act on other amino acids. In Dichelobacter nodosus (strain VCS1703A), this protein is Alanine racemase (alr).